The sequence spans 313 residues: Acetaldehyde dehydrogenase (313 aa).

13–16 (SGNI) contacts NAD(+). Cys-133 (acyl-thioester intermediate) is an active-site residue. NAD(+) is bound by residues 164 to 172 (SAGPGTRAN) and Asn-291.

This sequence belongs to the acetaldehyde dehydrogenase family.

The enzyme catalyses acetaldehyde + NAD(+) + CoA = acetyl-CoA + NADH + H(+). This Cupriavidus pinatubonensis (strain JMP 134 / LMG 1197) (Cupriavidus necator (strain JMP 134)) protein is Acetaldehyde dehydrogenase.